We begin with the raw amino-acid sequence, 152 residues long: D-erythrulose-4-phosphate isomerase (152 aa).

The active-site Proton acceptor is the Cys67.

Belongs to the LacAB/RpiB family.

The enzyme catalyses D-erythrulose 4-phosphate = D-erythrose 4-phosphate. It participates in carbohydrate metabolism. Its function is as follows. Involved in catabolism of D-apiose. Catalyzes the isomerization of D-erythrulose 4-phosphate to D-erythrose 4-phosphate. The sequence is that of D-erythrulose-4-phosphate isomerase from Pectobacterium atrosepticum (strain SCRI 1043 / ATCC BAA-672) (Erwinia carotovora subsp. atroseptica).